The chain runs to 445 residues: Neuropeptide Y receptor type 5 (445 aa).

The Extracellular segment spans residues Met1–Tyr42. N-linked (GlcNAc...) asparagine glycans are attached at residues Asn10 and Asn17. Residues Phe43–Leu63 traverse the membrane as a helical segment. Topologically, residues Met64–Asn77 are cytoplasmic. Residues Phe78 to Thr98 traverse the membrane as a helical segment. The Extracellular segment spans residues Leu99–Met117. The cysteines at positions 114 and 198 are disulfide-linked. A helical transmembrane segment spans residues Pro118–Val138. The Cytoplasmic segment spans residues Arg139–Gly156. The chain crosses the membrane as a helical span at residues Tyr157–Phe177. Over His178–Arg208 the chain is Extracellular. The helical transmembrane segment at Ile209–Val229 threads the bilayer. At Ser230–Arg368 the chain is on the cytoplasmic side. The chain crosses the membrane as a helical span at residues Leu369 to Val389. Over Thr390–Tyr406 the chain is Extracellular. A helical membrane pass occupies residues Cys407–Leu427. The Cytoplasmic portion of the chain corresponds to Asn428–Ser445. A lipid anchor (S-palmitoyl cysteine) is attached at Cys441.

The protein belongs to the G-protein coupled receptor 1 family. Brain; hypothalamus.

Its subcellular location is the cell membrane. In terms of biological role, receptor for neuropeptide Y and peptide YY. The activity of this receptor is mediated by G proteins that inhibit adenylate cyclase activity. Seems to be associated with food intake. Could be involved in feeding disorders. This chain is Neuropeptide Y receptor type 5 (Npy5r), found in Rattus norvegicus (Rat).